The sequence spans 179 residues: Coiled-coil domain-containing protein 32 (179 aa).

Residues 75-98 (EVYLASLEKKLRRIKGLNEEVTSK) are a coiled coil. A disordered region spans residues 157 to 179 (FLIPPESQAEKPEARDEPAAAEQ). A compositionally biased stretch (basic and acidic residues) spans 164–179 (QAEKPEARDEPAAAEQ).

In terms of assembly, interacts with AP2S1; the interaction is direct and mediates association with adaptor protein complex 2 (AP-2).

The protein localises to the membrane. It localises to the coated pit. Regulates clathrin-mediated endocytsois of cargos such as transferrin probably through the association and modulation of adaptor protein complex 2 (AP-2). Has a role in ciliogenesis. Required for proper cephalic and left/right axis development. This Rattus norvegicus (Rat) protein is Coiled-coil domain-containing protein 32 (Ccdc32).